Here is a 380-residue protein sequence, read N- to C-terminus: Deoxyguanosinetriphosphate triphosphohydrolase-like protein (380 aa).

In terms of domain architecture, HD spans 79 to 196 (RLTHTLEVQQ…VDAADALAYT (118 aa)).

The protein belongs to the dGTPase family. Type 2 subfamily.

The chain is Deoxyguanosinetriphosphate triphosphohydrolase-like protein from Deinococcus deserti (strain DSM 17065 / CIP 109153 / LMG 22923 / VCD115).